We begin with the raw amino-acid sequence, 750 residues long: Photosystem I P700 chlorophyll a apoprotein A1 (750 aa).

8 helical membrane passes run 70–93 (VFSA…FHGA), 156–179 (LYCT…FHYH), 195–219 (LNHH…HVSL), 291–309 (IAHH…GHMY), 346–369 (WHAQ…HHMY), 385–411 (LSLF…IFMV), 433–455 (AIIS…LYIH), and 531–549 (FLVH…LILL). [4Fe-4S] cluster-binding residues include cysteine 573 and cysteine 582. Transmembrane regions (helical) follow at residues 589-610 (HVFL…HFSW) and 664-686 (LSAY…MFLF). Residue histidine 675 participates in chlorophyll a' binding. Chlorophyll a contacts are provided by methionine 683 and tyrosine 691. A phylloquinone-binding site is contributed by tryptophan 692. Residues 724–744 (AVGVTHYLLGGIATTWAFFLA) form a helical membrane-spanning segment.

The protein belongs to the PsaA/PsaB family. As to quaternary structure, the PsaA/B heterodimer binds the P700 chlorophyll special pair and subsequent electron acceptors. PSI consists of a core antenna complex that captures photons, and an electron transfer chain that converts photonic excitation into a charge separation. The eukaryotic PSI reaction center is composed of at least 11 subunits. P700 is a chlorophyll a/chlorophyll a' dimer, A0 is one or more chlorophyll a, A1 is one or both phylloquinones and FX is a shared 4Fe-4S iron-sulfur center. is required as a cofactor.

It is found in the plastid. Its subcellular location is the chloroplast thylakoid membrane. The enzyme catalyses reduced [plastocyanin] + hnu + oxidized [2Fe-2S]-[ferredoxin] = oxidized [plastocyanin] + reduced [2Fe-2S]-[ferredoxin]. Its function is as follows. PsaA and PsaB bind P700, the primary electron donor of photosystem I (PSI), as well as the electron acceptors A0, A1 and FX. PSI is a plastocyanin-ferredoxin oxidoreductase, converting photonic excitation into a charge separation, which transfers an electron from the donor P700 chlorophyll pair to the spectroscopically characterized acceptors A0, A1, FX, FA and FB in turn. Oxidized P700 is reduced on the lumenal side of the thylakoid membrane by plastocyanin. The polypeptide is Photosystem I P700 chlorophyll a apoprotein A1 (Nasturtium officinale (Watercress)).